The chain runs to 494 residues: Nicotianamine aminotransferase 1 (494 aa).

Low complexity-rich tracts occupy residues 24-38 and 48-62; these read SGTS…TSSS and STAM…AASS. Residues 24 to 76 form a disordered region; it reads SGTSYPTRTTTTSSSAPEFTNKKQSTAMAPTTAAAAASSNGGGESDGSSKEWR. K322 carries the post-translational modification N6-(pyridoxal phosphate)lysine.

The protein belongs to the class-I pyridoxal-phosphate-dependent aminotransferase family. Pyridoxal 5'-phosphate is required as a cofactor. As to expression, expressed in companion and pericycle cells adjacent to the protoxylem of roots. Expressed in companion cells of shoots.

The enzyme catalyses nicotianamine + 2-oxoglutarate = 3''-deamino-3''-oxonicotianamine + L-glutamate. In terms of biological role, involved in biosynthesis of mugineic acid family phytosiderophores, which are ferric iron chelators produced in graminaceous plants in response to iron deficiency. The sequence is that of Nicotianamine aminotransferase 1 from Oryza sativa subsp. japonica (Rice).